Consider the following 149-residue polypeptide: L-alanine exporter AlaE (149 aa).

4 helical membrane passes run 17-37, 43-63, 86-106, and 111-131; these read FAMV…ISGM, LASR…YGVF, LTAY…TVGA, and IITA…FYGY.

It belongs to the AlaE exporter family.

The protein resides in the cell inner membrane. Functionally, exports L-alanine. The sequence is that of L-alanine exporter AlaE from Aliivibrio salmonicida (strain LFI1238) (Vibrio salmonicida (strain LFI1238)).